The sequence spans 434 residues: MSDFFAGIPAVTYEGPEARSDFAFRHYNPDEMVMGKRMEDQLRFAVAWWHSFAWEGGDPFGGPTFQRPWFGDTLDHARAKADAAFEMFRILNVPFYCFHDADIRPEGASFAETTANLEAMVDYLGQKQEASGKRLLWGTANLFSHRRYMAGAATNPDPDVFAYAAATIKTCMDATHKLGGANYVLWGGREGYETLLNTDLGREREQAGRMLQMVVDYKHKIGFEGTILLEPKPQEPTKHQYDYDVATVFSFLSEFGLQDEVKMNIEQGHAILAGHSFEHELALAREFGILGSIDMNRNDYQSGWDTDQFPNNIPEVALAYYEILRAGGFDTGGTNFDSKLRRQSLDPADLIAAHVAAMDVCAAGLKAAARMLEDGELEQRREDRYAGWRAPSAEAMLNGGKLEDCFAHVMETGLDPQPVSGGQERLEALVARYL.

Residues His-99 and Asp-102 contribute to the active site. Glu-230, Glu-266, His-269, Asp-294, Asp-305, Asp-307, and Asp-337 together coordinate Mg(2+).

The protein belongs to the xylose isomerase family. In terms of assembly, homotetramer. Requires Mg(2+) as cofactor.

The protein localises to the cytoplasm. The enzyme catalyses alpha-D-xylose = alpha-D-xylulofuranose. This chain is Xylose isomerase, found in Dinoroseobacter shibae (strain DSM 16493 / NCIMB 14021 / DFL 12).